The following is a 385-amino-acid chain: MYKTKGGFQLTLQTLSLVVGFMAWSIISPLMPYISQDVKVNPGQLSIILAIPVILGSILRVPFGYLTNIIGAKWVFFCSFVILLFPIFFLGQAQTPGMLMLSGFFLGVGGAIFSVGVTSVPKYFSKDKVGLANGIYGMGNIGTAVSSFLAPPIAGIIGWQTTVRSYLIIIAIFAILMFIFGDKNEPKVKVPLASQFKKLSSNYKLYYLSLWYFITFGAFVAFGLFLPNYLVNNFGIDKVDAGIRSGVFIALATFLRPIGGILGDKFNAVKVLMIDFIIMIVGAVILGISSHIALFTIGCLTISICAGLGNGLIFKLVPSYFAKESGAANGIVSMMGGLGGFFPPLVITYVTGLTGSSHLAFILLAIFGVLAFITMGHLYKKEYAK.

12 helical membrane-spanning segments follow: residues 14–34 (TLSLVVGFMAWSIISPLMPYI), 47–67 (IILAIPVILGSILRVPFGYLT), 69–89 (IIGAKWVFFCSFVILLFPIFF), 97–117 (GMLMLSGFFLGVGGAIFSVGV), 139–159 (GNIGTAVSSFLAPPIAGIIGW), 161–181 (TTVRSYLIIIAIFAILMFIFG), 205–225 (LYYLSLWYFITFGAFVAFGLF), 246–266 (GVFIALATFLRPIGGILGDKF), 277–297 (IIMIVGAVILGISSHIALFTI), 302–322 (ISICAGLGNGLIFKLVPSYFA), 330–350 (GIVSMMGGLGGFFPPLVITYV), and 359–379 (LAFILLAIFGVLAFITMGHLY).

It belongs to the major facilitator superfamily. Nitrate/nitrite porter (TC 2.A.1.8) family.

The protein resides in the cell membrane. Its function is as follows. Probably required for nitrate uptake under anoxic conditions. Also possibly involved in excretion of nitrite produced by the dissimilatory reduction of nitrate. The chain is Probable nitrate transporter NarT (narT) from Staphylococcus haemolyticus (strain JCSC1435).